Consider the following 277-residue polypeptide: Protein OPG166 (277 aa).

Asn29 and Asn58 each carry an N-linked (GlcNAc...) asparagine; by host glycan. 5 helical membrane-spanning segments follow: residues 124 to 144, 156 to 176, 186 to 206, 219 to 239, and 247 to 267; these read TMLMFIFTGITLFLLFLEITY, GILQVFGCVIAMIELCGAFLF, IIGLLMMTLPSIFLIITKVFS, LIIYYQLAGYILTVLGLGLSL, and LLLSGLGTIMVSEHFSLLFLV.

The protein belongs to the orthopoxvirus OPG166 protein family.

The protein localises to the host membrane. Functionally, promotes, when overexpressed, the influx of extracellular Ca(2+), leading to membrane permeability and host cell necrosis. This Vaccinia virus (strain Copenhagen) (VACV) protein is Protein OPG166 (OPG166).